Reading from the N-terminus, the 323-residue chain is Aldo-keto reductase family 1 member C4 (323 aa).

Residues 20-24 (GFGTY) and aspartate 50 contribute to the NADP(+) site. The active-site Proton donor is the tyrosine 55. Residue histidine 117 coordinates substrate. NADP(+) is bound by residues 166–167 (SN), glutamine 190, 216–221 (HSALGT), and 270–280 (KSYNEQRIREN).

The protein belongs to the aldo/keto reductase family. In terms of assembly, monomer. The N-terminus is blocked. In terms of tissue distribution, liver specific.

It localises to the cytoplasm. The protein resides in the cytosol. It carries out the reaction a 3alpha-hydroxysteroid + NADP(+) = a 3-oxosteroid + NADPH + H(+). It catalyses the reaction a 3alpha-hydroxysteroid + NAD(+) = a 3-oxosteroid + NADH + H(+). The enzyme catalyses 5alpha-androstane-3alpha,17beta-diol + NADP(+) = 17beta-hydroxy-5alpha-androstan-3-one + NADPH + H(+). The catalysed reaction is 5alpha-androstane-3beta,17beta-diol + NADP(+) = 17beta-hydroxy-5alpha-androstan-3-one + NADPH + H(+). It carries out the reaction 5alpha-androstane-3alpha,17beta-diol + NAD(+) = 17beta-hydroxy-5alpha-androstan-3-one + NADH + H(+). It catalyses the reaction 17beta-estradiol + NADP(+) = estrone + NADPH + H(+). The enzyme catalyses 17beta-estradiol + NAD(+) = estrone + NADH + H(+). The catalysed reaction is (20S)-hydroxypregn-4-en-3-one + NADP(+) = progesterone + NADPH + H(+). It carries out the reaction (20S)-hydroxypregn-4-en-3-one + NAD(+) = progesterone + NADH + H(+). It catalyses the reaction androsterone + NADP(+) = 5alpha-androstan-3,17-dione + NADPH + H(+). The enzyme catalyses testosterone + NADP(+) = androst-4-ene-3,17-dione + NADPH + H(+). The catalysed reaction is testosterone + NAD(+) = androst-4-ene-3,17-dione + NADH + H(+). It carries out the reaction 3alpha-hydroxy-5alpha-androstane 17-O-(beta-D-glucuronate) + NADP(+) = 5alpha-dihydrotestosterone 17-O-(beta-D-glucuronate) + NADPH + H(+). It catalyses the reaction (3beta,5alpha,17beta)-3-hydroxy-androstan-17-yl sulfate + NADP(+) = 5alpha-dihydrotestosterone sulfate + NADPH + H(+). The enzyme catalyses 5alpha-androstane-3alpha,17beta-diol + NAD(+) = androsterone + NADH + H(+). The catalysed reaction is chlordecone alcohol + NADP(+) = chlordecone + NADPH + H(+). It functions in the pathway steroid metabolism. Inhibited by nonsteroidal the anti-inflammatory drugs (NSAID) flufenamic. The oxidation reaction is inhibited by low micromolar concentrations of NADPH. Functionally, cytosolic aldo-keto reductase that catalyzes the NADH and NADPH-dependent reduction of ketosteroids to hydroxysteroids. Liver specific enzyme that acts as an NAD(P)(H)-dependent 3-, 17- and 20-ketosteroid reductase on the steroid nucleus and side chain. Displays the ability to catalyze both oxidation and reduction in vitro, but most probably acts as a reductase in vivo since the oxidase activity measured in vitro is inhibited by physiological concentration of NADPH. Acts preferentially as a 3-alpha-hydroxysteroid dehydrogenase (HSD) with a subsidiary 3-beta-HSD activity. Catalyzes efficiently the transformation of the potent androgen 5-alpha-dihydrotestosterone (5alpha-DHT or 17beta-hydroxy-5alpha-androstan-3-one) into the less active form, 5-alpha-androstan-3-alpha,17-beta-diol (3-alpha-diol). Catalyzes the reduction of estrone into 17beta-estradiol but with low efficiency. Metabolizes a broad spectrum of natural and synthetic therapeutic steroid and plays an important role in metabolism of androgens, estrogens, progestereone and conjugated steroids. Catalyzes the biotransformation of the pesticide chlordecone (kepone) to its corresponding alcohol leading to increased biliary excretion of the pesticide and concomitant reduction of its neurotoxicity since bile is the major excretory route. In Homo sapiens (Human), this protein is Aldo-keto reductase family 1 member C4 (AKR1C4).